The sequence spans 311 residues: Methionyl-tRNA formyltransferase (311 aa).

109-112 provides a ligand contact to (6S)-5,6,7,8-tetrahydrofolate; that stretch reads SLLP.

This sequence belongs to the Fmt family.

It carries out the reaction L-methionyl-tRNA(fMet) + (6R)-10-formyltetrahydrofolate = N-formyl-L-methionyl-tRNA(fMet) + (6S)-5,6,7,8-tetrahydrofolate + H(+). In terms of biological role, attaches a formyl group to the free amino group of methionyl-tRNA(fMet). The formyl group appears to play a dual role in the initiator identity of N-formylmethionyl-tRNA by promoting its recognition by IF2 and preventing the misappropriation of this tRNA by the elongation apparatus. The sequence is that of Methionyl-tRNA formyltransferase from Kosmotoga olearia (strain ATCC BAA-1733 / DSM 21960 / TBF 19.5.1).